Consider the following 71-residue polypeptide: Disintegrin viridin (71 aa).

A Disintegrin domain is found at 1 to 71; the sequence is AGEECDCGSP…SADCPRNRFH (71 aa). 6 disulfides stabilise this stretch: Cys5–Cys20, Cys7–Cys15, Cys14–Cys37, Cys28–Cys34, Cys33–Cys58, and Cys46–Cys65. The Cell attachment site signature appears at 50–52; the sequence is RGD. The disordered stretch occupies residues 50-71; the sequence is RGDNPDDRCTGQSADCPRNRFH.

The protein belongs to the venom metalloproteinase (M12B) family. P-II subfamily. P-IIa sub-subfamily. As to quaternary structure, monomer (disintegrin). In terms of tissue distribution, expressed by the venom gland.

It is found in the secreted. Functionally, inhibits fibrinogen interaction with platelets. Acts by binding to alpha-IIb/beta-3 (ITGA2B/ITGB3) on the platelet surface and inhibits aggregation induced by ADP, thrombin, platelet-activating factor and collagen. This chain is Disintegrin viridin, found in Crotalus viridis viridis (Prairie rattlesnake).